The sequence spans 414 residues: Glutamyl-tRNA reductase (414 aa).

Residues 49-52 (TCNR), serine 108, 113-115 (EPQ), and glutamine 119 contribute to the substrate site. Cysteine 50 (nucleophile) is an active-site residue. An NADP(+)-binding site is contributed by 188 to 193 (GAGQTG).

Belongs to the glutamyl-tRNA reductase family. As to quaternary structure, homodimer.

The enzyme catalyses (S)-4-amino-5-oxopentanoate + tRNA(Glu) + NADP(+) = L-glutamyl-tRNA(Glu) + NADPH + H(+). It functions in the pathway porphyrin-containing compound metabolism; protoporphyrin-IX biosynthesis; 5-aminolevulinate from L-glutamyl-tRNA(Glu): step 1/2. Catalyzes the NADPH-dependent reduction of glutamyl-tRNA(Glu) to glutamate 1-semialdehyde (GSA). This Francisella tularensis subsp. holarctica (strain FTNF002-00 / FTA) protein is Glutamyl-tRNA reductase.